A 750-amino-acid polypeptide reads, in one-letter code: Phosphoribosylformylglycinamidine synthase subunit PurL (750 aa).

H54 is an active-site residue. Residues Y57 and K101 each contribute to the ATP site. Residue E103 participates in Mg(2+) binding. Residues 104-107 (SHNH) and R126 each bind substrate. Catalysis depends on H105, which acts as the Proton acceptor. D127 provides a ligand contact to Mg(2+). Residue Q251 participates in substrate binding. D279 is a Mg(2+) binding site. 323-325 (ESQ) is a substrate binding site. ATP-binding residues include D509 and G546. N547 provides a ligand contact to Mg(2+). S549 is a binding site for substrate.

This sequence belongs to the FGAMS family. As to quaternary structure, monomer. Part of the FGAM synthase complex composed of 1 PurL, 1 PurQ and 2 PurS subunits.

It is found in the cytoplasm. It catalyses the reaction N(2)-formyl-N(1)-(5-phospho-beta-D-ribosyl)glycinamide + L-glutamine + ATP + H2O = 2-formamido-N(1)-(5-O-phospho-beta-D-ribosyl)acetamidine + L-glutamate + ADP + phosphate + H(+). It functions in the pathway purine metabolism; IMP biosynthesis via de novo pathway; 5-amino-1-(5-phospho-D-ribosyl)imidazole from N(2)-formyl-N(1)-(5-phospho-D-ribosyl)glycinamide: step 1/2. Part of the phosphoribosylformylglycinamidine synthase complex involved in the purines biosynthetic pathway. Catalyzes the ATP-dependent conversion of formylglycinamide ribonucleotide (FGAR) and glutamine to yield formylglycinamidine ribonucleotide (FGAM) and glutamate. The FGAM synthase complex is composed of three subunits. PurQ produces an ammonia molecule by converting glutamine to glutamate. PurL transfers the ammonia molecule to FGAR to form FGAM in an ATP-dependent manner. PurS interacts with PurQ and PurL and is thought to assist in the transfer of the ammonia molecule from PurQ to PurL. In Cutibacterium acnes (strain DSM 16379 / KPA171202) (Propionibacterium acnes), this protein is Phosphoribosylformylglycinamidine synthase subunit PurL.